The sequence spans 255 residues: Pyridoxine 5'-phosphate synthase (255 aa).

Asn8 and Arg19 together coordinate 3-amino-2-oxopropyl phosphate. His44 serves as the catalytic Proton acceptor. Arg46 and His51 together coordinate 1-deoxy-D-xylulose 5-phosphate. The Proton acceptor role is filled by Glu74. Thr111 contributes to the 1-deoxy-D-xylulose 5-phosphate binding site. Residue His202 is the Proton donor of the active site. 3-amino-2-oxopropyl phosphate-binding positions include Asp203 and 225–226 (GH).

It belongs to the PNP synthase family. As to quaternary structure, homooctamer; tetramer of dimers.

The protein resides in the cytoplasm. It carries out the reaction 3-amino-2-oxopropyl phosphate + 1-deoxy-D-xylulose 5-phosphate = pyridoxine 5'-phosphate + phosphate + 2 H2O + H(+). The protein operates within cofactor biosynthesis; pyridoxine 5'-phosphate biosynthesis; pyridoxine 5'-phosphate from D-erythrose 4-phosphate: step 5/5. Its function is as follows. Catalyzes the complicated ring closure reaction between the two acyclic compounds 1-deoxy-D-xylulose-5-phosphate (DXP) and 3-amino-2-oxopropyl phosphate (1-amino-acetone-3-phosphate or AAP) to form pyridoxine 5'-phosphate (PNP) and inorganic phosphate. This is Pyridoxine 5'-phosphate synthase from Xanthomonas axonopodis pv. citri (strain 306).